Reading from the N-terminus, the 138-residue chain is Secreted RxLR effector protein 91 (138 aa).

The N-terminal stretch at 1 to 18 (MVIPHIICLPMALHLWTC) is a signal peptide. Residues 34-37 (RRLR) carry the RxLR motif. A glycan (N-linked (GlcNAc...) asparagine) is linked at Asn-93.

The protein belongs to the RxLR effector family.

Its subcellular location is the secreted. It localises to the host nucleus. Secreted effector that completely suppresses the host cell death induced by cell death-inducing proteins. This is Secreted RxLR effector protein 91 from Plasmopara viticola (Downy mildew of grapevine).